The chain runs to 280 residues: Shikimate kinase (280 aa).

86–96 (PPGVGLKGSAA) lines the ATP pocket.

It belongs to the GHMP kinase family. Archaeal shikimate kinase subfamily.

It localises to the cytoplasm. It carries out the reaction shikimate + ATP = 3-phosphoshikimate + ADP + H(+). It participates in metabolic intermediate biosynthesis; chorismate biosynthesis; chorismate from D-erythrose 4-phosphate and phosphoenolpyruvate: step 5/7. The polypeptide is Shikimate kinase (aroK) (Aeropyrum pernix (strain ATCC 700893 / DSM 11879 / JCM 9820 / NBRC 100138 / K1)).